Consider the following 363-residue polypeptide: Protein-glutamate methylesterase/protein-glutamine glutaminase of group 3 operon (363 aa).

One can recognise a Response regulatory domain in the interval 7 to 124 (RVLIVDDSAS…RQALMESSGR (118 aa)). Position 58 is a 4-aspartylphosphate (Asp58). The CheB-type methylesterase domain maps to 166-357 (PTTERIVCIG…REIMAWQQAK (192 aa)). Catalysis depends on residues Ser177, His203, and Asp299.

This sequence belongs to the CheB family. In terms of processing, phosphorylated by CheA. Phosphorylation of the N-terminal regulatory domain activates the methylesterase activity.

Its subcellular location is the cytoplasm. The catalysed reaction is [protein]-L-glutamate 5-O-methyl ester + H2O = L-glutamyl-[protein] + methanol + H(+). It catalyses the reaction L-glutaminyl-[protein] + H2O = L-glutamyl-[protein] + NH4(+). In terms of biological role, involved in chemotaxis. Part of a chemotaxis signal transduction system that modulates chemotaxis in response to various stimuli. Catalyzes the demethylation of specific methylglutamate residues introduced into the chemoreceptors (methyl-accepting chemotaxis proteins or MCP) by CheR. Also mediates the irreversible deamidation of specific glutamine residues to glutamic acid. This is Protein-glutamate methylesterase/protein-glutamine glutaminase of group 3 operon from Rhodopseudomonas palustris (strain ATCC BAA-98 / CGA009).